The chain runs to 162 residues: Cyclic pyranopterin monophosphate synthase (162 aa).

Residues 79 to 81 (LCH) and 117 to 118 (ME) each bind substrate. Aspartate 132 is a catalytic residue.

This sequence belongs to the MoaC family. Homohexamer; trimer of dimers.

It carries out the reaction (8S)-3',8-cyclo-7,8-dihydroguanosine 5'-triphosphate = cyclic pyranopterin phosphate + diphosphate. It functions in the pathway cofactor biosynthesis; molybdopterin biosynthesis. In terms of biological role, catalyzes the conversion of (8S)-3',8-cyclo-7,8-dihydroguanosine 5'-triphosphate to cyclic pyranopterin monophosphate (cPMP). This is Cyclic pyranopterin monophosphate synthase from Bordetella avium (strain 197N).